Consider the following 210-residue polypeptide: Protein-methionine-sulfoxide reductase heme-binding subunit MsrQ (210 aa).

The next 4 membrane-spanning stretches (helical) occupy residues 15 to 35 (DTLV…WLAW), 89 to 109 (LFAF…DLFF), 122 to 142 (PFIT…VTST), and 160 to 180 (LVYL…KADH).

The protein belongs to the MsrQ family. Heterodimer of a catalytic subunit (MsrP) and a heme-binding subunit (MsrQ). It depends on FMN as a cofactor. Heme b serves as cofactor.

The protein localises to the cell inner membrane. Functionally, part of the MsrPQ system that repairs oxidized periplasmic proteins containing methionine sulfoxide residues (Met-O), using respiratory chain electrons. Thus protects these proteins from oxidative-stress damage caused by reactive species of oxygen and chlorine generated by the host defense mechanisms. MsrPQ is essential for the maintenance of envelope integrity under bleach stress, rescuing a wide series of structurally unrelated periplasmic proteins from methionine oxidation. MsrQ provides electrons for reduction to the reductase catalytic subunit MsrP, using the quinone pool of the respiratory chain. The polypeptide is Protein-methionine-sulfoxide reductase heme-binding subunit MsrQ (Caulobacter vibrioides (strain ATCC 19089 / CIP 103742 / CB 15) (Caulobacter crescentus)).